Reading from the N-terminus, the 1676-residue chain is DNA-directed RNA polymerase subunit beta'-beta'' (1676 aa).

Residues 1–582 (MCDAIQIRLA…FLKTTPGRII (582 aa)) form a DNA-directed RNA polymerase subunit beta' region. The Zn(2+) site is built by C64, C66, C79, and C82. D454, D456, and D458 together coordinate Mg(2+). The segment at 583 to 1676 (FYQQAAYHVG…IPAGTGAKYL (1094 aa)) is DNA-directed RNA polymerase subunit beta''. The Zn(2+) site is built by C804, C859, C866, and C869.

In the N-terminal section; belongs to the RNA polymerase beta' chain family. RpoC1 subfamily. It in the C-terminal section; belongs to the RNA polymerase beta' chain family. RpoC2 subfamily. As to quaternary structure, in plastids the minimal PEP RNA polymerase catalytic core is composed of four subunits: alpha, beta, beta', and beta''. When a (nuclear-encoded) sigma factor is associated with the core the holoenzyme is formed, which can initiate transcription. Beta' and beta'' are fused in this algae. Mg(2+) is required as a cofactor. It depends on Zn(2+) as a cofactor.

It localises to the plastid. The protein localises to the chloroplast. It carries out the reaction RNA(n) + a ribonucleoside 5'-triphosphate = RNA(n+1) + diphosphate. Its function is as follows. DNA-dependent RNA polymerase catalyzes the transcription of DNA into RNA using the four ribonucleoside triphosphates as substrates. The polypeptide is DNA-directed RNA polymerase subunit beta'-beta'' (Cyanidioschyzon merolae (strain NIES-3377 / 10D) (Unicellular red alga)).